The primary structure comprises 2034 residues: Sperm vesicle fusion protein fer-1 (2034 aa).

Residues 1 to 80 form a disordered region; it reads MTVKEKLLKV…GGSDIELLPD (80 aa). Residues 1–1998 are Cytoplasmic-facing; the sequence is MTVKEKLLKV…CIKYFWHYYG (1998 aa). Residues 66–79 are compositionally biased toward acidic residues; that stretch reads ELSDDGGSDIELLP. C2 domains are found at residues 229–367, 954–1082, 1120–1246, and 1363–1484; these read RIDE…YLPT, DSED…PQWF, YKER…KSDH, and KKGK…ATGG. Residues 1563–1619 are disordered; that stretch reads QKAGKENFSDGSDQQNEDVSDGSWDEEDLEREKEKLKWEKHRSKGKPLKKVTTEKAE. Acidic residues predominate over residues 1577–1591; sequence QNEDVSDGSWDEEDL. Residues 1600-1611 show a composition bias toward basic residues; that stretch reads WEKHRSKGKPLK. The region spanning 1684 to 1831 is the C2 5 domain; it reads EYGAIPAPFN…EGIGSPSDVG (148 aa). The interval 1953 to 1972 is disordered; the sequence is QEPAGKKRSEPNHSPFLEKP. Residues 1999–2019 form a helical membrane-spanning segment; that stretch reads LQILLWLIIIVILILTIFVLL. Topologically, residues 2020–2034 are extracellular; it reads HTWPTILAEIIKAIF.

The protein belongs to the ferlin family. As to expression, exclusively expressed in the testis.

It localises to the membrane. In terms of biological role, required for the fusion of the membranous organelles (MOs) with the plasma membrane, a process essential in spermiogenesis. In Caenorhabditis elegans, this protein is Sperm vesicle fusion protein fer-1 (fer-1).